The chain runs to 35 residues: Photosystem II reaction center protein T (35 aa).

A helical membrane pass occupies residues 3-23; the sequence is ALVYTFLLVSTLGIIFFAIFF.

It belongs to the PsbT family. PSII is composed of 1 copy each of membrane proteins PsbA, PsbB, PsbC, PsbD, PsbE, PsbF, PsbH, PsbI, PsbJ, PsbK, PsbL, PsbM, PsbT, PsbY, PsbZ, Psb30/Ycf12, at least 3 peripheral proteins of the oxygen-evolving complex and a large number of cofactors. It forms dimeric complexes.

The protein resides in the plastid. It localises to the chloroplast thylakoid membrane. In terms of biological role, found at the monomer-monomer interface of the photosystem II (PS II) dimer, plays a role in assembly and dimerization of PSII. PSII is a light-driven water plastoquinone oxidoreductase, using light energy to abstract electrons from H(2)O, generating a proton gradient subsequently used for ATP formation. The protein is Photosystem II reaction center protein T of Gossypium barbadense (Sea Island cotton).